The chain runs to 705 residues: Elongation factor G (705 aa).

Positions 8–290 (EKYRNIGICA…GVVEYLPAPN (283 aa)) constitute a tr-type G domain. Residues 17-24 (AHVDAGKT), 88-92 (DTPGH), and 142-145 (NKMD) contribute to the GTP site.

It belongs to the TRAFAC class translation factor GTPase superfamily. Classic translation factor GTPase family. EF-G/EF-2 subfamily.

It is found in the cytoplasm. Its function is as follows. Catalyzes the GTP-dependent ribosomal translocation step during translation elongation. During this step, the ribosome changes from the pre-translocational (PRE) to the post-translocational (POST) state as the newly formed A-site-bound peptidyl-tRNA and P-site-bound deacylated tRNA move to the P and E sites, respectively. Catalyzes the coordinated movement of the two tRNA molecules, the mRNA and conformational changes in the ribosome. The protein is Elongation factor G of Francisella philomiragia subsp. philomiragia (strain ATCC 25017 / CCUG 19701 / FSC 153 / O#319-036).